The sequence spans 5289 residues: Mucin-2 (5289 aa).

The N-terminal stretch at 1 to 20 (MGLPLARLAAVCLALSLAGG) is a signal peptide. At Ser-21 the chain carries Phosphoserine. His-34 is a binding site for Cu(2+). The VWFD 1 domain maps to 35 to 207 (NVCSTWGNFH…KINQPDVVCE (173 aa)). Disulfide bonds link Cys-37-Cys-169, Cys-59-Cys-206, Cys-67-Cys-166, Cys-218-Cys-255, Cys-225-Cys-250, Cys-237-Cys-275, Cys-257-Cys-263, Cys-265-Cys-291, Cys-295-Cys-329, Cys-308-Cys-321, Cys-312-Cys-351, Cys-331-Cys-345, Cys-353-Cys-375, Cys-370-Cys-387, Cys-373-Cys-382, Cys-391-Cys-528, Cys-413-Cys-563, Cys-435-Cys-443, Cys-574-Cys-619, Cys-588-Cys-614, Cys-601-Cys-639, Cys-621-Cys-627, Cys-629-Cys-654, Cys-661-Cys-698, Cys-674-Cys-688, Cys-678-Cys-718, Cys-700-Cys-712, Cys-720-Cys-742, and Cys-740-Cys-749. Asp-49 contacts Ca(2+). Residues Met-146 and Met-154 each contribute to the Cu(+) site. Glu-156 contributes to the Cu(2+) binding site. Asn-163 carries an N-linked (GlcNAc...) asparagine glycan. Asp-171, Asn-173, Leu-175, and Glu-180 together coordinate Ca(2+). Residue His-277 participates in Cu(2+) binding. The TIL domain maps to 295–351 (CPGNLVYLESGSPCMDTCSHLEVSSLCEEHRMDGCFCPEGTVYDDIGDSGCVPVSQC). Residue His-324 participates in Cu(2+) binding. Position 326 (Met-326) interacts with Cu(+). The VWFD 2 domain maps to 389–564 (GTCALEGGSH…NTWKAQSSCH (176 aa)). Asp-403 serves as a coordination point for Ca(2+). Asn-423 is a glycosylation site (N-linked (GlcNAc...) asparagine). Asn-530, Asn-532, Leu-534, Asp-537, and Asp-538 together coordinate Ca(2+). N-linked (GlcNAc...) asparagine glycosylation occurs at Asn-670. Residue Asn-770 is glycosylated (N-linked (GlcNAc...) asparagine). 21 disulfides stabilise this stretch: Cys-784/Cys-820, Cys-802/Cys-814, Cys-822/Cys-844, Cys-839/Cys-856, Cys-842/Cys-851, Cys-860/Cys-992, Cys-882/Cys-1027, Cys-891/Cys-989, Cys-909/Cys-916, Cys-1037/Cys-1080, Cys-1051/Cys-1075, Cys-1062/Cys-1102, Cys-1082/Cys-1090, Cys-1092/Cys-1117, Cys-1108/Cys-1137, Cys-1121/Cys-1163, Cys-1145/Cys-1187, Cys-1167/Cys-1181, Cys-1189/Cys-1213, Cys-1208/Cys-1238, and Cys-1211/Cys-1221. Residues 858 to 1028 (GTCSIYGSGH…NSWKEAPTCP (171 aa)) enclose the VWFD 3 domain. Asp-872 is a binding site for Ca(2+). An N-linked (GlcNAc...) asparagine glycan is attached at Asn-894. Ca(2+) is bound by residues Asn-994, Asp-996, Arg-998, Asn-1001, and Asp-1002. N-linked (GlcNAc...) asparagine glycosylation is found at Asn-1139 and Asn-1154. Asn-1215, Asn-1230, and Asn-1246 each carry an N-linked (GlcNAc...) asparagine glycan. Thr-1266, Thr-1267, Thr-1269, Thr-1270, Thr-1272, Thr-1275, Thr-1276, Thr-1281, Thr-1282, and Thr-1287 each carry an O-linked (GalNAc) threonine glycan. Residues Ser-1291 and Ser-1292 are each glycosylated (O-linked (GalNAc) serine). The O-linked (GalNAc) threonine glycan is linked to Thr-1293. An O-linked (GalNAc) serine glycan is attached at Ser-1296. An O-linked (GalNAc) threonine glycan is attached at Thr-1297. Positions 1310, 1312, 1313, 1316, 1319, 1321, 1322, 1324, 1381, and 1382 each coordinate Ca(2+). Composition is skewed to pro residues over residues 1399–1411 (PSPP…PPPT), 1419–1510 (TTTP…PITP), 1520–1549 (TTTP…PITP), 1559–1628 (TTTP…PITP), and 1638–1679 (TTTP…PPTT). The tract at residues 1399–1773 (PSPPTTTPSP…SITPPTFSPF (375 aa)) is disordered. A run of 6 repeats spans residues 1401 to 1416 (PPTT…TTTL), 1417 to 1432 (PPTT…TTTP), 1433 to 1448 (PPTT…TTTP), 1449 to 1464 (PPTT…TTTP), 1465 to 1471 (PPTTTPS), and 1472 to 1478 (PPTTTPS). The approximate repeats stretch occupies residues 1401-1747 (PPTTTPSPPP…SPPTTTMTTL (347 aa)). The 7A repeat unit spans residues 1479–1494 (PPTTTPSPPTTTTTTP). One copy of the 7B repeat lies at 1495–1517 (PPTTTPSPPTTTPITPPASTTTL). One copy of the 8A repeat lies at 1518–1533 (PPTTTPSPPTTTTTTP). An 8B repeat occupies 1534 to 1556 (PPTTTPSPPTTTPITPPTSTTTL). One copy of the 9A repeat lies at 1557–1572 (PPTTTPSPPPTTTTTP). The stretch at 1573 to 1596 (PPTTTPSPPTTTTPSPPTITTTTP) is one 9B repeat. The 10A repeat unit spans residues 1597 to 1612 (PPTTTPSPPTTTTTTP). The stretch at 1613–1635 (PPTTTPSPPTTTPITPPTSTTTL) is one 10B repeat. The stretch at 1636–1651 (PPTTTPSPPPTTTTTP) is one 11A repeat. The 11B repeat unit spans residues 1652–1675 (PPTTTPSPPTTTTPSPPITTTTTP). 5 repeat units span residues 1676–1683 (PPTTTPSS), 1684–1699 (PITT…MTTP), 1700–1715 (SPTT…TTTP), 1716–1731 (SSTT…MTTP), and 1732–1747 (SPTT…MTTL). 2 stretches are compositionally biased toward low complexity: residues 1680–1720 (TPSS…STTT) and 1741–1759 (TTTM…LTTT). The segment covering 1760–1770 (PLPPSITPPTF) has biased composition (pro residues). 2 N-linked (GlcNAc...) asparagine glycosylation sites follow: Asn-1787 and Asn-1820. 4 stretches are compositionally biased toward low complexity: residues 1885 to 2158 (MTTT…TMVT), 2165 to 4238 (GTQT…QTPT), 4269 to 4315 (TTVT…STAP), and 4329 to 4430 (STPQ…PSII). Disordered regions lie at residues 1885 to 4238 (MTTT…QTPT) and 4269 to 4430 (TTVT…PSII). N-linked (GlcNAc...) asparagine glycans are attached at residues Asn-4449, Asn-4461, Asn-4472, and Asn-4483. The disordered stretch occupies residues 4492-4524 (PTPTPSKSTPTPSKPSSTPSKPTPGTKPPECPD). Over residues 4496-4511 (PSKSTPTPSKPSSTPS) the composition is skewed to low complexity. Pro residues predominate over residues 4512-4522 (KPTPGTKPPEC). 3 N-linked (GlcNAc...) asparagine glycosylation sites follow: Asn-4532, Asn-4548, and Asn-4612. The 184-residue stretch at 4589–4772 (CYCTGWGDPH…VNDPSKPHCP (184 aa)) folds into the VWFD 4 domain. 3 disulfide bridges follow: Cys-4591-Cys-4732, Cys-4613-Cys-4771, and Cys-4637-Cys-4645. Residues Asn-4726 and Asn-4737 are each glycosylated (N-linked (GlcNAc...) asparagine). Positions 4770–4795 (HCPHSSSTTKRPAVTVPGGGKTTPHK) are disordered. N-linked (GlcNAc...) asparagine glycans are attached at residues Asn-4862, Asn-4897, Asn-4991, Asn-4998, Asn-5065, Asn-5080, Asn-5129, Asn-5148, and Asn-5179. Residues 4927–4996 (CVGPDNVPRE…DTCCNITVCK (70 aa)) form the VWFC 1 domain. One can recognise a VWFC 2 domain in the interval 5034–5101 (GVCVHGNAEY…APGECCKKCE (68 aa)). Cystine bridges form between Cys-5185/Cys-5232, Cys-5199/Cys-5246, Cys-5208/Cys-5262, and Cys-5212/Cys-5264. The CTCK domain maps to 5185 to 5270 (CSTVPVTTEV…SCQCQDTVCG (86 aa)).

Homomultimer; disulfide-linked. The N- and C-terminus mediate their assembly into higher order structures to form filaments. The CTCK domains of two polypeptides associate in the endoplasmic reticulum to generate intermolecularly disulfide-bonded dimers. These dimers progress to the Golgi apparatus, which is a more acidic environment than the endoplasmic reticulum. Under acidic conditions, the N-termini form non-covalent intermolecular interactions that juxtapose assemblies of the third VWD domain (VWD3) from different CTCK-linked dimers. The VWD3 assemblies then become disulfide bonded to one another to produce long, disulfide-linked polymers that remain highly compact until secretion. Interacts with FCGBP. Interacts with AGR2; disulfide-linked. As to quaternary structure, (Microbial infection) Interacts in vitro with L.monocytogenes internalin proteins InlB, InlC and InlJ; for InlC binding is slightly better at pH 5.5, (the pH of the intestine) than at pH 7.4. Post-translationally, O-glycosylated. O-glycosylation is required for mucin assembly. Goblet cells synthesize two forms of mucin that differ in branched chain O-glycosylation and the site of production in the colon. In terms of processing, may undergo proteolytic cleavage in the outer mucus layer of the colon, contributing to the expanded volume and loose nature of this layer which allows for bacterial colonization in contrast to the inner mucus layer which is dense and devoid of bacteria. At low pH of 6 and under, undergoes autocatalytic cleavage in vitro in the N-terminal region of the fourth VWD domain. It is likely that this also occurs in vivo and is triggered by the low pH of the late secretory pathway. Colon, small intestine, colonic tumors, bronchus, cervix and gall bladder.

Its subcellular location is the secreted. Coats the epithelia of the intestines and other mucus membrane-containing organs to provide a protective, lubricating barrier against particles and infectious agents at mucosal surfaces. Major constituent of the colon mucus, which is mainly formed by large polymeric networks of MUC2 secreted by goblet cells that cover the exposed surfaces of intestine. MUC2 networks form hydrogels that guard the underlying epithelium from pathogens and other hazardous matter entering from the outside world, while permitting nutrient absorption and gas exchange. Acts as a divalent copper chaperone that protects intestinal cells from copper toxicity and facilitates nutritional copper unptake into cells. Binds both Cu(2+) and its reduced form, Cu(1+), at two juxtaposed binding sites: Cu(2+), once reduced to Cu(1+) by vitamin C (ascorbate) or other dietary antioxidants, transits to the other binding site. MUC2-bound Cu(1+) is protected from oxidation in aerobic environments, and can be released for nutritional delivery to cells. Mucin gels store antimicrobial molecules that participate in innate immunity. Mucin glycoproteins also house and feed the microbiome, lubricate tissue surfaces, and may facilitate the removal of contaminants and waste products from the body. Goblet cells synthesize two forms of MUC2 mucin that differ in branched chain O-glycosylation and the site of production in the colon: a (1) 'thick' mucus that wraps the microbiota to form fecal pellets is produced in the proximal, ascending colon. 'Thick' mucus transits along the descending colon and is lubricated by a (2) 'thin' MUC2 mucus produced in the distal colon which adheres to the 'thick' mucus. This is Mucin-2 from Homo sapiens (Human).